The following is a 513-amino-acid chain: Zinc finger CCCH-type with G patch domain-containing protein (513 aa).

Position 1 is an N-acetylmethionine (Met-1). The segment at Pro-92–Ser-131 is disordered. The segment covering Gly-115–Gly-126 has biased composition (acidic residues). Residues Lys-176–Val-202 form a C3H1-type zinc finger. The interval Leu-267–Ala-298 is disordered. Ser-278 and Ser-355 each carry phosphoserine. The region spanning Thr-315–Glu-361 is the G-patch domain. Disordered regions lie at residues Thr-367 to Arg-394 and Gln-493 to Phe-513. Residues Leu-497 to Phe-513 are compositionally biased toward basic and acidic residues.

Interacts with CHD4/Mi-2; the interaction is direct.

The protein localises to the nucleus. Functionally, transcription repressor that specifically binds the 5'-GGAG[GA]A[GA]A-3' consensus sequence. Represses transcription by recruiting the chromatin multiprotein complex NuRD to target promoters. Negatively regulates expression of EGFR, a gene involved in cell proliferation, survival and migration. Its ability to repress genes of the EGFR pathway suggest it may act as a tumor suppressor. This chain is Zinc finger CCCH-type with G patch domain-containing protein (ZGPAT), found in Ovis aries (Sheep).